The chain runs to 342 residues: Galactose mutarotase (342 aa).

Position 14 is a phosphoserine (S14). Beta-D-galactose-binding positions include N81–R82, H107, H176–Y178, D243, Q279, and E307. H176 serves as the catalytic Proton donor. E307 serves as the catalytic Proton acceptor.

This sequence belongs to the aldose epimerase family. In terms of assembly, monomer.

The protein resides in the cytoplasm. It carries out the reaction alpha-D-galactose = beta-D-galactose. The enzyme catalyses alpha-D-glucose = beta-D-glucose. It functions in the pathway carbohydrate metabolism; hexose metabolism. The protein operates within carbohydrate metabolism; galactose metabolism. Functionally, mutarotase that catalyzes the interconversion of beta-D-galactose and alpha-D-galactose during galactose metabolism. Beta-D-galactose is metabolized in the liver into glucose 1-phosphate, the primary metabolic fuel, by the action of four enzymes that constitute the Leloir pathway: GALM, GALK1 (galactokinase), GALT (galactose-1-phosphate uridylyltransferase) and GALE (UDP-galactose-4'-epimerase). Involved in the maintenance of the equilibrium between the beta- and alpha-anomers of galactose, therefore ensuring a sufficient supply of the alpha-anomer for GALK1. Also active on D-glucose although shows a preference for galactose over glucose. The protein is Galactose mutarotase of Mus musculus (Mouse).